The chain runs to 961 residues: MPVSRSPIEDLANGFARRHIGPSPQEIAAMLRAVGAPSLDALMGETLPAAIRQAKPLDLGPALSEPEALAHMAELAAKNQVFTSLIGQGYYGTAMPTVIQRNILENPAWYTAYTPYQPEISQGRLEALFNFQTMICDLTGLDVANASLLDEGTAAAEAMALAERAMPKKTKAFFVDRDTHPQTLAVLRTRAEPLGWQIIVGDPVSDLQKADVFGALLQYPGSSGALRDPRPMIAALHAKGGLAVIAADLLALTLLASPGDLGADIAIGSAQRFGVPMGYGGPHAGFMAVRDSLKRALPGRIVGQSIDSHGQPAYRLALQTREQHIRREKATSNICTAQVLLAVLASMYAVYHGPEGLSAIARSIHRKTAVLAAGLRKLGFTTRNEAFFDTITVDVGDKQSEIIARARDENINLRIGDGTLGLSLDETTTPKIVEAVWRAFGGALSYAEIEPAMRDALHPTLKRTSPFMTQEVFHLYRSETELLRYMRKLSDRDLALDRAMIPLGSCTMKLNATTEMMPLSLPGFAHLHPFAPPEQALGYHALFDKLETWLAEITGYDAVSLQPNSGAQGEYAGLLAIRGYYKSRGEPHRKICLIPSSAHGTNPASAAMAGMEVVVVECNDRGDVDVDDLRARAELHSPNLAAVMITYPSTHGVFEEHIRDICDIVHAHGGQVYLDGANLNAQVGLARPGEYGADVSHINLHKTFAIPHGGGGPGMGPIGVKAHLAPFLPGHPCCDDTGPDGFSHGGGTVAAAPWGSASVLTISYVYILLMGGDGLKRATEVAILNANYVAAKLDPHFPVLYKNERGRVAHECIVDPRALKNSSGVTVDDIAKRLIDYGFHAPTMSFPVVGTLMIEPTESESKAELDRFCDAMIAIRREIAEIETGRWKVEQSPLRFAPHTVHDLAEDHWHRPYSRAIGCFPAGTARHDKYWCPVGRIDNVYGDRNLVCSCPPIEDYALAAE.

K702 is subject to N6-(pyridoxal phosphate)lysine.

This sequence belongs to the GcvP family. As to quaternary structure, the glycine cleavage system is composed of four proteins: P, T, L and H. It depends on pyridoxal 5'-phosphate as a cofactor.

It carries out the reaction N(6)-[(R)-lipoyl]-L-lysyl-[glycine-cleavage complex H protein] + glycine + H(+) = N(6)-[(R)-S(8)-aminomethyldihydrolipoyl]-L-lysyl-[glycine-cleavage complex H protein] + CO2. The glycine cleavage system catalyzes the degradation of glycine. The P protein binds the alpha-amino group of glycine through its pyridoxal phosphate cofactor; CO(2) is released and the remaining methylamine moiety is then transferred to the lipoamide cofactor of the H protein. This is Glycine dehydrogenase (decarboxylating) from Rhodopseudomonas palustris (strain BisA53).